A 173-amino-acid polypeptide reads, in one-letter code: Large ribosomal subunit protein uL5 (173 aa).

The protein belongs to the universal ribosomal protein uL5 family. As to quaternary structure, part of the 50S ribosomal subunit; contacts the 5S rRNA and probably tRNA. Forms a bridge to the 30S subunit in the 70S ribosome.

Its function is as follows. This is one of the proteins that bind and probably mediate the attachment of the 5S RNA into the large ribosomal subunit, where it forms part of the central protuberance. In the 70S ribosome it contacts protein S13 of the 30S subunit (bridge B1b), connecting the 2 subunits; this bridge is implicated in subunit movement. May contact the P site tRNA; the 5S rRNA and some of its associated proteins might help stabilize positioning of ribosome-bound tRNAs. In Nitrosopumilus maritimus (strain SCM1), this protein is Large ribosomal subunit protein uL5.